A 155-amino-acid chain; its full sequence is Ribosome maturation factor RimP (155 aa).

Belongs to the RimP family.

Its subcellular location is the cytoplasm. Functionally, required for maturation of 30S ribosomal subunits. This chain is Ribosome maturation factor RimP, found in Exiguobacterium sibiricum (strain DSM 17290 / CCUG 55495 / CIP 109462 / JCM 13490 / 255-15).